Here is a 160-residue protein sequence, read N- to C-terminus: Baculoviral IAP repeat-containing protein 5.1-A (160 aa).

One copy of the BIR repeat lies at 27 to 97 (RLATFADWPF…KRSANCGFLS (71 aa)). At Thr-43 the chain carries Phosphothreonine; by CDK1. Cys-66, Cys-69, His-86, and Cys-93 together coordinate Zn(2+).

The protein belongs to the IAP family. In terms of assembly, component of the CPC at least composed of survivin/birc5, incenp, cdca8/borealin and/or cdca9/dasra-A, and aurkb/aurora-B. Interacts directly with incenp (via N-terminus), and may weakly interact with aurkb (via N-terminus) to stabilize the complex. Interacts with GTP-bound ran in both the S and M phases of the cell cycle. Also found in a complex with ubiquitin-mediated signaling proteins including at least usp9x/xFAM, nploc4/npl4 and ufd1. Ubiquitination is required for centrosome-targeting.

It localises to the cytoplasm. It is found in the nucleus. Its subcellular location is the chromosome. The protein resides in the centromere. The protein localises to the cytoskeleton. It localises to the spindle. Component of the chromosomal passenger complex (CPC), a complex that acts as a key regulator of mitosis. The CPC complex has essential functions at the centromere in ensuring correct chromosome alignment and segregation and is required for chromatin-induced microtubule stabilization and spindle assembly. Stimulates the mitotic kinase activity of aurkb/aurora-B in the CPC. Does not appear to exhibit anti-apoptotic activity. The protein is Baculoviral IAP repeat-containing protein 5.1-A (birc5.1-a) of Xenopus laevis (African clawed frog).